A 283-amino-acid chain; its full sequence is Nucleoid occlusion protein (283 aa).

Positions 142-161 (ESLAQRLGKGQSTIANKLRL) form a DNA-binding region, H-T-H motif.

The protein belongs to the ParB family.

It localises to the cytoplasm. It is found in the nucleoid. Functionally, effects nucleoid occlusion by binding relatively nonspecifically to DNA and preventing the assembly of the division machinery in the vicinity of the nucleoid, especially under conditions that disturb the cell cycle. It helps to coordinate cell division and chromosome segregation by preventing the formation of the Z ring through the nucleoid, which would cause chromosome breakage. This is Nucleoid occlusion protein from Shouchella clausii (strain KSM-K16) (Alkalihalobacillus clausii).